Reading from the N-terminus, the 273-residue chain is MPELPEVETVRRGLEKLLLGRTILSLEVKVPKMIKTSYDSFLHDLPGQTIQAMRRRGKYLIFDFGQLIIISHLRMEGKYLLFTDQVPDNKHFHLFFKLDDGSTLVYQDVRKFGTFDLLDRKQEEAYFTRKELGPEPTKKTFKYVPFERALMHSGKSIKPLLLEQKLVAGLGNIYVDEVLWAAKVHPETPANKLSKAAMKRVHDQTIAILQLGIAKGGSTIRTYRNALGEDGTMQNYLQVYGKTGQPCPRCASMIVKIKLGGRGTHLCPHCQKR.

The active-site Schiff-base intermediate with DNA is P2. E3 acts as the Proton donor in catalysis. Residue K58 is the Proton donor; for beta-elimination activity of the active site. Residues H91 and R110 each coordinate DNA. Residues Q238–K272 form an FPG-type zinc finger. Catalysis depends on R262, which acts as the Proton donor; for delta-elimination activity.

Belongs to the FPG family. In terms of assembly, monomer. Zn(2+) serves as cofactor.

It catalyses the reaction Hydrolysis of DNA containing ring-opened 7-methylguanine residues, releasing 2,6-diamino-4-hydroxy-5-(N-methyl)formamidopyrimidine.. The enzyme catalyses 2'-deoxyribonucleotide-(2'-deoxyribose 5'-phosphate)-2'-deoxyribonucleotide-DNA = a 3'-end 2'-deoxyribonucleotide-(2,3-dehydro-2,3-deoxyribose 5'-phosphate)-DNA + a 5'-end 5'-phospho-2'-deoxyribonucleoside-DNA + H(+). Functionally, involved in base excision repair of DNA damaged by oxidation or by mutagenic agents. Acts as a DNA glycosylase that recognizes and removes damaged bases. Has a preference for oxidized purines, such as 7,8-dihydro-8-oxoguanine (8-oxoG). Has AP (apurinic/apyrimidinic) lyase activity and introduces nicks in the DNA strand. Cleaves the DNA backbone by beta-delta elimination to generate a single-strand break at the site of the removed base with both 3'- and 5'-phosphates. In Streptococcus thermophilus (strain CNRZ 1066), this protein is Formamidopyrimidine-DNA glycosylase.